Here is an 840-residue protein sequence, read N- to C-terminus: 9-beta-pimara-7,15-diene synthase, chloroplastic (840 aa).

The transit peptide at 1–56 (MASPMEAVARSSLVLAPRRRRALGLLPAAAAPFVLDCRRRHNGGMRRPHVSFACSA) directs the protein to the chloroplast. Mg(2+) contacts are provided by D589, D593, N733, S737, and E741. Positions 589–593 (DDFFD) match the DDXXD motif motif.

It belongs to the terpene synthase family. Requires Mg(2+) as cofactor.

The protein resides in the plastid. It localises to the chloroplast. The enzyme catalyses 9alpha-copalyl diphosphate = 9beta-pimara-7,15-diene + diphosphate. Its function is as follows. Involved in the biosynthesis of momilactone A and B phytoalexins. Catalyzes the conversion of syn-copalyl diphosphate to the phytoalexin precursor syn-pimara-7,15-diene. This Oryza sativa subsp. indica (Rice) protein is 9-beta-pimara-7,15-diene synthase, chloroplastic.